The primary structure comprises 324 residues: Glyoxylate/hydroxypyruvate reductase B (324 aa).

Residues Arg237 and Glu266 contribute to the active site. The active-site Proton donor is the His285.

The protein belongs to the D-isomer specific 2-hydroxyacid dehydrogenase family. GhrB subfamily. As to quaternary structure, homodimer.

It localises to the cytoplasm. The enzyme catalyses glycolate + NADP(+) = glyoxylate + NADPH + H(+). It carries out the reaction (R)-glycerate + NAD(+) = 3-hydroxypyruvate + NADH + H(+). It catalyses the reaction (R)-glycerate + NADP(+) = 3-hydroxypyruvate + NADPH + H(+). Its function is as follows. Catalyzes the NADPH-dependent reduction of glyoxylate and hydroxypyruvate into glycolate and glycerate, respectively. In Shigella flexneri, this protein is Glyoxylate/hydroxypyruvate reductase B.